The primary structure comprises 622 residues: Pyranose 2-oxidase (622 aa).

Positions 1 to 28 (MSASSSDPFHSFAKTSFTSKAAKRATAH) are cleaved as a signal peptide. The propeptide occupies 29 to 37 (SLPPLPGPG). Position 167 is a tele-8alpha-FAD histidine (histidine 167). Substrate-binding residues include glutamine 449 and histidine 451. Residue histidine 546 is the Proton acceptor of the active site. Asparagine 591 is an active-site residue.

The protein belongs to the GMC oxidoreductase family. As to quaternary structure, homotetramer. FAD serves as cofactor.

It localises to the periplasm. It carries out the reaction D-glucose + O2 = 2-dehydro-D-glucose + H2O2. In terms of biological role, catalyzes the oxidation of various aldopyranoses and disaccharides on carbon-2 to the corresponding 2-keto sugars concomitant with the reduction of O(2) to H(2)O(2). Plays an important role in lignin degradation of wood rot fungi by supplying the essential cosubstrate H(2)O(2) for the ligninolytic peroxidases, lignin peroxidase and manganese-dependent peroxidase. The preferred substrate is D-glucose which is converted to 2-dehydro-D-glucose, an intermediate of a secondary metabolic pathway leading to the antibiotic cortalcerone. Also acts on D-xylose, together with D-glucose the major sugars derived from wood, on L-sorbose, D-galactose and 1,5-anhydroglucitol, a diagnostic marker of diabetes mellitus. This is Pyranose 2-oxidase (P2OX) from Trametes hirsuta (White-rot fungus).